Here is a 567-residue protein sequence, read N- to C-terminus: Potassium-transporting ATPase potassium-binding subunit (567 aa).

The next 12 helical transmembrane spans lie at 3 to 23 (MIGWLQIILFCVIIVALTKPL), 64 to 84 (LTYTVAMLLFHVGGFLVIYGV), 136 to 156 (GLTHQNFLSAATGIALAMALI), 179 to 199 (LYVLLPICVVYTLFLVWQGIP), 220 to 240 (VGPVASQVAIKMLGTNGGGFF), 254 to 274 (LSNFVQMLSIFALGAALTNVF), 285 to 305 (WAILAVMGVLFVAGVAVTYWA), 330 to 350 (FGLVASSLFAVITTAASCGAV), 374 to 394 (IIVGGVGAGLYGMLLFVVLAI), 420 to 440 (AMLAILVLPLMYLGWTAVGVV), 488 to 508 (LASAMFVGRFFMIVPAMAIAG), and 527 to 547 (GGLFVGLVVGVILIIGGLTFF).

It belongs to the KdpA family. In terms of assembly, the system is composed of three essential subunits: KdpA, KdpB and KdpC.

It localises to the cell inner membrane. Part of the high-affinity ATP-driven potassium transport (or Kdp) system, which catalyzes the hydrolysis of ATP coupled with the electrogenic transport of potassium into the cytoplasm. This subunit binds the periplasmic potassium ions and delivers the ions to the membrane domain of KdpB through an intramembrane tunnel. This is Potassium-transporting ATPase potassium-binding subunit from Bradyrhizobium diazoefficiens (strain JCM 10833 / BCRC 13528 / IAM 13628 / NBRC 14792 / USDA 110).